We begin with the raw amino-acid sequence, 809 residues long: MKIPLKWLKEYLPTDMSPAELAERMTMAGTEVTVLNSRKDKWPNVYVGQIMEVNRHPNADRLVLVKVDWGQGQETVVTGAPNCKAGDKVVFARTGAVLIDGHNGKEMVLKPAVLRGVESCGMVCSERELGLSDEHEGILILPADAPVGMLASEYLGEIILDLELTPNRGDLMCVTGVARELGALIDRLPSISTPDFKATGKDIKDKINIEIKNTKLCTRYTASLIEGIKIGESPDWLKERLIACGMRPINNVVDATNYVMLEFGQPLHSFDYDQIKSKHIIVRPAAEGEVLTTLDGVERKLSPDMLLITEPDKIIALAGVMGGENTEVTEKTASVLLESATFDKHSIRRTAKALKLQSEASARFEKGLSFELAPVALKRATQLILEIAGGQAASGLMDVMPVKKDRNSVVLSLSKVNRVLGLEGEKFDSCKIAKRLGFAWMPEYVPGMEEFGYGSVDDKMRFFPGYWRMDIESDIDMIEEVARIAGYDTIPCLPLDKAIPKIETPPLPGIKRFLRQILSGYGFQELISYSFTSREMLSRVFSGAEPECLAISNPMSSEQEVMRTSLRPALYASLAANRRFEKNGLRLYELGRIYLPKENNKQDEPEMLCALIAGSASEAWWQRNTAGFDFFDAKGIVESLVSRLGIAADFAVSDEPGLTPGYQAGILVGDMPVGVLGQLSPQTADKFGITEPVYMFEINLSKLITRATVRRKFTQINRFPSVERDLALVLDRSITNRQVTDIISEFDLVKNVELFDMYQGKQVAEDKKSLAYHLLFQSDTHTLKDADVDSVMNQILKRLNTETGAVLRS.

A tRNA-binding domain is found at 39–152; the sequence is KDKWPNVYVG…ADAPVGMLAS (114 aa). The B5 domain maps to 404 to 492; that stretch reads KDRNSVVLSL…RIAGYDTIPC (89 aa). Residues Asp-470, Asp-476, Glu-479, and Glu-480 each coordinate Mg(2+). An FDX-ACB domain is found at 717-808; that stretch reads NRFPSVERDL…LNTETGAVLR (92 aa).

Belongs to the phenylalanyl-tRNA synthetase beta subunit family. Type 1 subfamily. In terms of assembly, tetramer of two alpha and two beta subunits. The cofactor is Mg(2+).

The protein resides in the cytoplasm. The enzyme catalyses tRNA(Phe) + L-phenylalanine + ATP = L-phenylalanyl-tRNA(Phe) + AMP + diphosphate + H(+). The sequence is that of Phenylalanine--tRNA ligase beta subunit from Dehalococcoides mccartyi (strain ATCC BAA-2266 / KCTC 15142 / 195) (Dehalococcoides ethenogenes (strain 195)).